The sequence spans 580 residues: Nuclear body protein SP140-like protein (580 aa).

The region spanning 33-149 is the HSR domain; sequence SLQRLFTEDQ…IYKSFKNAIQ (117 aa). Residues 155 to 293 are disordered; it reads QESDRKEREE…RSRASRKHKD (139 aa). Positions 156–170 are enriched in basic and acidic residues; sequence ESDRKEREERPDIKL. A Glycyl lysine isopeptide (Lys-Gly) (interchain with G-Cter in SUMO2) cross-link involves residue lysine 169. Serine 180 is subject to Phosphoserine. Positions 207–219 are enriched in basic residues; the sequence is KPKRKRRKKKGHG. A compositionally biased stretch (polar residues) spans 224 to 236; that stretch reads GTRTQKNNQQNDN. A compositionally biased stretch (basic residues) spans 280 to 290; the sequence is QKRVRSRASRK. A Glycyl lysine isopeptide (Lys-Gly) (interchain with G-Cter in SUMO2) cross-link involves residue lysine 292. The 82-residue stretch at 293–374 folds into the SAND domain; sequence DETVDFQAPL…RRLMEEGSLP (82 aa). Residues 403 to 449 form a PHD-type zinc finger; sequence LDECEVCRDGGELFCCDTCSRVFHEDCHIPPVESEKTPWNCIFCRMK. Positions 467 to 570 constitute a Bromo domain; the sequence is QMCPEEQLKC…AEFEKDFKEV (104 aa).

The chain is Nuclear body protein SP140-like protein (SP140L) from Homo sapiens (Human).